Reading from the N-terminus, the 185-residue chain is MKTAMELRSGNVIMVGADPLVVQKSEYNKSGRNAAVVKMKLKNLLTGAASEAVYKADDKFEVVVLDKKEVTYSYFADPMYVFMDADYEQFEVEAENMTDALKYLEDGLACEVVFYNGKAISVELPNSVVREVVYTEPAVKGDTSGKVMKPAKLATGFELPVPAFVSIGDKIEIDTRTDEYKNRVK.

The protein belongs to the elongation factor P family.

Its subcellular location is the cytoplasm. It participates in protein biosynthesis; polypeptide chain elongation. Its function is as follows. Involved in peptide bond synthesis. Stimulates efficient translation and peptide-bond synthesis on native or reconstituted 70S ribosomes in vitro. Probably functions indirectly by altering the affinity of the ribosome for aminoacyl-tRNA, thus increasing their reactivity as acceptors for peptidyl transferase. In Dechloromonas aromatica (strain RCB), this protein is Elongation factor P.